A 278-amino-acid chain; its full sequence is HTH-type transcriptional activator RhaS (278 aa).

An HTH araC/xylS-type domain is found at 174–272; sequence NQLMAWLEDH…NWSPRDIRQG (99 aa). 2 consecutive DNA-binding regions (H-T-H motif) follow at residues 191–212 and 239–262; these read EAVAEQFSLSLRTLHRQLKQHT and VTEIAYRCGFGDSNHFSTLFRREF.

In terms of assembly, binds DNA as a dimer.

The protein localises to the cytoplasm. Functionally, activates expression of the rhaBAD and rhaT operons. This is HTH-type transcriptional activator RhaS from Salmonella agona (strain SL483).